Consider the following 290-residue polypeptide: MNFRNAHILTAMVTPFDDEGNYSSKRTKNLINYLLDNGTEGLLVSGTTGEAPTLSEDEKLQLIKDSVKFIDGRVPLMVGTGSNNTQQTIDYTNKVADIDGVDAALVVVPYYNKPNQKGMIAHFRKVADYSNLPIIIYNIPGRTGVTMEVDTIIELAQHDNIIGIKDCTGVENIAKIVENVPEDFLVYSGEDAEALSARVLGGQGIISVASHIYGDNMKTMYSSLESGDVSMAGKIMRDLIPKAEALFSYPSPSPVKAALNKIGYNVGGCRLPIVSLDKNEENELFKKLKI.

Pyruvate is bound at residue T48. The active-site Proton donor/acceptor is the Y137. K165 serves as the catalytic Schiff-base intermediate with substrate. I206 lines the pyruvate pocket.

The protein belongs to the DapA family. As to quaternary structure, homotetramer; dimer of dimers.

It localises to the cytoplasm. The catalysed reaction is L-aspartate 4-semialdehyde + pyruvate = (2S,4S)-4-hydroxy-2,3,4,5-tetrahydrodipicolinate + H2O + H(+). The protein operates within amino-acid biosynthesis; L-lysine biosynthesis via DAP pathway; (S)-tetrahydrodipicolinate from L-aspartate: step 3/4. Its function is as follows. Catalyzes the condensation of (S)-aspartate-beta-semialdehyde [(S)-ASA] and pyruvate to 4-hydroxy-tetrahydrodipicolinate (HTPA). This is 4-hydroxy-tetrahydrodipicolinate synthase from Ligilactobacillus salivarius (strain UCC118) (Lactobacillus salivarius).